Reading from the N-terminus, the 163-residue chain is Nucleotide-binding protein ROP_16630 (163 aa).

Belongs to the YajQ family.

Nucleotide-binding protein. This chain is Nucleotide-binding protein ROP_16630, found in Rhodococcus opacus (strain B4).